Consider the following 618-residue polypeptide: Protease 4 (618 aa).

The Cytoplasmic segment spans residues 1-24; sequence MRTLWRFIAGFFKWTWRLLNFVRE. Residues 25-45 traverse the membrane as a helical segment; that stretch reads MVLNLFFIFLVLVGVGIWMQV. The Periplasmic segment spans residues 46–618; that stretch reads SGGDSKETAS…AFCLTCANMR (573 aa). Lys-209 functions as the Proton donor/acceptor in the catalytic mechanism. Ser-409 functions as the Nucleophile in the catalytic mechanism.

This sequence belongs to the peptidase S49 family. Homotetramer.

Its subcellular location is the cell inner membrane. Inhibited by serine hydrolase inhibitor FP-biotin and by antipain. Its function is as follows. Digests cleaved signal peptides in vitro, its in vivo function is unknown. This activity is necessary to maintain proper secretion of mature proteins across the membrane. This Escherichia coli (strain K12) protein is Protease 4 (sppA).